The chain runs to 493 residues: Glycerol kinase (493 aa).

Threonine 13 lines the ADP pocket. ATP is bound by residues threonine 13, threonine 14, and serine 15. Residue threonine 13 coordinates sn-glycerol 3-phosphate. An ADP-binding site is contributed by arginine 17. Residues arginine 83, glutamate 84, tyrosine 135, and aspartate 244 each coordinate sn-glycerol 3-phosphate. 5 residues coordinate glycerol: arginine 83, glutamate 84, tyrosine 135, aspartate 244, and glutamine 245. Residues threonine 266 and glycine 309 each coordinate ADP. ATP is bound by residues threonine 266, glycine 309, glutamine 313, and glycine 410. ADP contacts are provided by glycine 410 and asparagine 414.

Belongs to the FGGY kinase family.

The enzyme catalyses glycerol + ATP = sn-glycerol 3-phosphate + ADP + H(+). Its pathway is polyol metabolism; glycerol degradation via glycerol kinase pathway; sn-glycerol 3-phosphate from glycerol: step 1/1. Its activity is regulated as follows. Inhibited by fructose 1,6-bisphosphate (FBP). Functionally, key enzyme in the regulation of glycerol uptake and metabolism. Catalyzes the phosphorylation of glycerol to yield sn-glycerol 3-phosphate. The chain is Glycerol kinase from Shewanella pealeana (strain ATCC 700345 / ANG-SQ1).